Reading from the N-terminus, the 463-residue chain is Type IV secretion system protein PtlD (463 aa).

Positions 1–24 (MAGLSRILLSCTLACLLAGQAAQA) are cleaved as a signal peptide. 5 consecutive transmembrane segments (helical) span residues 118 to 138 (LQPL…YALL), 232 to 252 (WLLC…LAAS), 253 to 273 (LLIV…LFLV), 294 to 314 (ALVF…VLAG), and 333 to 353 (MLAA…VPLA). Over residues 376 to 410 (AHRQAAARQYAPRPAAAAAAAGPHQAGTYAASATP) the composition is skewed to low complexity. Residues 376-463 (AHRQAAARQY…RVLPRKPNLP (88 aa)) are disordered. Residues 411 to 420 (APAPARPAPS) are compositionally biased toward pro residues. Residues 441-455 (VRRDDRPAPAPDRRV) show a composition bias toward basic and acidic residues.

It is found in the cell membrane. Functionally, component of the type IV secretion system ptl required for secretion of assembled pertussis toxin (PTX) through the outer membrane. The polypeptide is Type IV secretion system protein PtlD (ptlD) (Bordetella pertussis (strain Tohama I / ATCC BAA-589 / NCTC 13251)).